A 219-amino-acid polypeptide reads, in one-letter code: Small ribosomal subunit protein uS3c (219 aa).

Residues 39–111 (IRKFLMEKIK…NSFFNVKINF (73 aa)) form the KH type-2 domain.

It belongs to the universal ribosomal protein uS3 family. In terms of assembly, part of the 30S ribosomal subunit.

It is found in the plastid. The protein is Small ribosomal subunit protein uS3c (rps3) of Euglena longa (Euglenophycean alga).